The primary structure comprises 1071 residues: Kinesin-like protein KIN-14J (1071 aa).

Residues 39 to 142 (KKGHQSLVEW…SLKALKASFS (104 aa)) enclose the Calponin-homology (CH) domain. A disordered region spans residues 157 to 181 (WSLPEDHSDSRGDDRNFTDGFQSKE). The segment covering 158 to 173 (SLPEDHSDSRGDDRNF) has biased composition (basic and acidic residues). Residues 299 to 389 (EKTRIEEKER…ELEKLCQSKS (91 aa)) adopt a coiled-coil conformation. The 329-residue stretch at 472–800 (NIRVYCRIRP…LKFAERVSGV (329 aa)) folds into the Kinesin motor domain. 556-563 (GQTGSGKT) provides a ligand contact to ATP. The stretch at 811 to 844 (GRDVRQLMEQVSNLKDVIAKKDEELQNFQKVKGN) forms a coiled coil. Disordered stretches follow at residues 852-931 (GLSN…AAKG) and 995-1071 (ARMT…NRRR). 2 stretches are compositionally biased toward basic and acidic residues: residues 910–921 (SDERKHQKDYHQ) and 995–1017 (ARMTSEKLEKSVKMGKTEPKDRT). The segment covering 1034 to 1049 (TRPSRLSIATSSSSKA) has biased composition (polar residues).

Belongs to the TRAFAC class myosin-kinesin ATPase superfamily. Kinesin family. KIN-14 subfamily.

The sequence is that of Kinesin-like protein KIN-14J from Arabidopsis thaliana (Mouse-ear cress).